The following is a 310-amino-acid chain: tRNA-cytidine(32) 2-sulfurtransferase (310 aa).

A PP-loop motif motif is present at residues 44–49 (SGGKDS). The [4Fe-4S] cluster site is built by cysteine 119, cysteine 122, and cysteine 210.

Belongs to the TtcA family. Homodimer. Requires Mg(2+) as cofactor. It depends on [4Fe-4S] cluster as a cofactor.

It localises to the cytoplasm. It carries out the reaction cytidine(32) in tRNA + S-sulfanyl-L-cysteinyl-[cysteine desulfurase] + AH2 + ATP = 2-thiocytidine(32) in tRNA + L-cysteinyl-[cysteine desulfurase] + A + AMP + diphosphate + H(+). It participates in tRNA modification. Its function is as follows. Catalyzes the ATP-dependent 2-thiolation of cytidine in position 32 of tRNA, to form 2-thiocytidine (s(2)C32). The sulfur atoms are provided by the cysteine/cysteine desulfurase (IscS) system. The polypeptide is tRNA-cytidine(32) 2-sulfurtransferase (Saccharophagus degradans (strain 2-40 / ATCC 43961 / DSM 17024)).